The primary structure comprises 568 residues: Urease subunit alpha (568 aa).

Ni(2+) is bound by residues H134, H136, and K217. The residue at position 217 (K217) is an N6-carboxylysine. Residue H219 participates in substrate binding. The Ni(2+) site is built by H246 and H272. H320 serves as the catalytic Proton donor. D360 provides a ligand contact to Ni(2+).

The protein belongs to the metallo-dependent hydrolases superfamily. Urease alpha subunit family. Heterotrimer of UreA (gamma), UreB (beta) and UreC (alpha) subunits. Three heterotrimers associate to form the active enzyme. Requires Ni cation as cofactor. In terms of processing, carboxylation allows a single lysine to coordinate two nickel ions.

Its subcellular location is the cytoplasm. The catalysed reaction is urea + 2 H2O + H(+) = hydrogencarbonate + 2 NH4(+). Its pathway is nitrogen metabolism; urea degradation; CO(2) and NH(3) from urea (urease route): step 1/1. This Marinomonas sp. (strain MWYL1) protein is Urease subunit alpha.